We begin with the raw amino-acid sequence, 217 residues long: ATP-dependent Clp protease proteolytic subunit (217 aa).

The Nucleophile role is filled by Ser-121. Residue His-146 is part of the active site.

Belongs to the peptidase S14 family. Fourteen ClpP subunits assemble into 2 heptameric rings which stack back to back to give a disk-like structure with a central cavity, resembling the structure of eukaryotic proteasomes.

The protein resides in the cytoplasm. It catalyses the reaction Hydrolysis of proteins to small peptides in the presence of ATP and magnesium. alpha-casein is the usual test substrate. In the absence of ATP, only oligopeptides shorter than five residues are hydrolyzed (such as succinyl-Leu-Tyr-|-NHMec, and Leu-Tyr-Leu-|-Tyr-Trp, in which cleavage of the -Tyr-|-Leu- and -Tyr-|-Trp bonds also occurs).. Its function is as follows. Cleaves peptides in various proteins in a process that requires ATP hydrolysis. Has a chymotrypsin-like activity. Plays a major role in the degradation of misfolded proteins. This is ATP-dependent Clp protease proteolytic subunit from Burkholderia lata (strain ATCC 17760 / DSM 23089 / LMG 22485 / NCIMB 9086 / R18194 / 383).